Reading from the N-terminus, the 397-residue chain is CCA-adding enzyme (397 aa).

The ATP site is built by Gly26 and Arg29. Residues Gly26 and Arg29 each contribute to the CTP site. Mg(2+) is bound by residues Asp39 and Asp41. Residues Arg110, Asp153, Arg156, Arg159, and Arg162 each contribute to the ATP site. CTP is bound by residues Arg110, Asp153, Arg156, Arg159, and Arg162.

Belongs to the tRNA nucleotidyltransferase/poly(A) polymerase family. Bacterial CCA-adding enzyme type 3 subfamily. As to quaternary structure, homodimer. Requires Mg(2+) as cofactor.

The catalysed reaction is a tRNA precursor + 2 CTP + ATP = a tRNA with a 3' CCA end + 3 diphosphate. It catalyses the reaction a tRNA with a 3' CCA end + 2 CTP + ATP = a tRNA with a 3' CCACCA end + 3 diphosphate. Functionally, catalyzes the addition and repair of the essential 3'-terminal CCA sequence in tRNAs without using a nucleic acid template. Adds these three nucleotides in the order of C, C, and A to the tRNA nucleotide-73, using CTP and ATP as substrates and producing inorganic pyrophosphate. tRNA 3'-terminal CCA addition is required both for tRNA processing and repair. Also involved in tRNA surveillance by mediating tandem CCA addition to generate a CCACCA at the 3' terminus of unstable tRNAs. While stable tRNAs receive only 3'-terminal CCA, unstable tRNAs are marked with CCACCA and rapidly degraded. This is CCA-adding enzyme from Bacillus cereus (strain B4264).